The primary structure comprises 768 residues: WD repeat-containing protein 20 homolog (768 aa).

A disordered region spans residues 103–122; that stretch reads ESPEAVAPTSSTYEHHKNEP. WD repeat units follow at residues 224–264, 302–342, 345–384, and 454–497; these read IEKT…ASSN, IGEG…LLAV, SYFG…VVCR, and CSLA…LNQG. The tract at residues 531 to 608 is disordered; sequence VSPGGAGVNA…VNSESSKKQN (78 aa). Positions 539-553 are enriched in polar residues; it reads NASSDSQSITNNHTT. Residues 570 to 582 are compositionally biased toward low complexity; the sequence is FSKFTSGSSSATS. Residues 595–608 are compositionally biased toward polar residues; that stretch reads NGASVNSESSKKQN. Residues 646–683 form a WD 5 repeat; that stretch reads VSHDRLTVLEFREDCVVTACQEGYICTWGRPGRYQPKR. The disordered stretch occupies residues 684–749; it reads DCINSPGTAS…PNITSPSYRV (66 aa). Over residues 688–712 the composition is skewed to polar residues; sequence SPGTASPESGQKPSGSTSAMTSSYG. Residues 724-733 show a composition bias toward low complexity; the sequence is SRSSSTYSNS. Positions 734 to 749 are enriched in polar residues; that stretch reads EQQLRSPNITSPSYRV.

Interacts with usp-46; the interaction increases the catalytic activity of usp-46 in the presence of wdr-48. As to expression, expressed in several neurons in the head and tail.

Together with wdr-48, binds to and stimulates the activity of the deubiquitinating enzyme usp-46, leading to deubiquitination and stabilization of the glr-1 glutamate receptor. This is WD repeat-containing protein 20 homolog from Caenorhabditis elegans.